The chain runs to 629 residues: uncharacterized protein (629 aa).

An N-acetylmethionine modification is found at M1. Residues 308 to 395 (VDPEPEPDPP…PGRRSRARNA (88 aa)) form a disordered region. A compositionally biased stretch (polar residues) spans 322-334 (SANEPASQPNSRS). In terms of domain architecture, VWFA spans 451 to 587 (LVIFVVDASG…VAEGAAAVVV (137 aa)).

This sequence belongs to the Mg-chelatase subunits D/I family.

This is an uncharacterized protein from Mycobacterium tuberculosis (strain ATCC 25618 / H37Rv).